The primary structure comprises 843 residues: Phosphatidylinositol-glycan-specific phospholipase D (843 aa).

Positions 1–23 (MSVGRLWSGLLLLLLFFCSRSSS) are cleaved as a signal peptide. N-linked (GlcNAc...) asparagine glycosylation is found at N94, N271, N292, N308, and N322. FG-GAP repeat units follow at residues 368 to 429 (SPSA…GLPP), 435 to 498 (DKEA…GRLS), 500 to 560 (SPNI…RNDK), 564 to 625 (TLDE…SLGR), 635 to 695 (QREI…GATR), 707 to 773 (ALFS…TLGD), and 791 to 843 (QYVL…FSSD). N-linked (GlcNAc...) asparagine glycans are attached at residues N483, N502, N592, N605, and N661.

It belongs to the GPLD1 family. Monomer. Post-translationally, glycosylated.

The protein localises to the secreted. It carries out the reaction a 6-(alpha-D-glucosaminyl)-1-(1,2-diacyl-sn-glycero-3-phospho)-1D-myo-inositol + H2O = 6-(alpha-D-glucosaminyl)-1D-myo-inositol + a 1,2-diacyl-sn-glycero-3-phosphate + H(+). In terms of biological role, this protein hydrolyzes the inositol phosphate linkage in proteins anchored by phosphatidylinositol glycans (GPI-anchor) thus releasing these proteins from the membrane. In Rattus norvegicus (Rat), this protein is Phosphatidylinositol-glycan-specific phospholipase D (Gpld1).